Consider the following 117-residue polypeptide: Large ribosomal subunit protein uL18 (117 aa).

It belongs to the universal ribosomal protein uL18 family. Part of the 50S ribosomal subunit; part of the 5S rRNA/L5/L18/L25 subcomplex. Contacts the 5S and 23S rRNAs.

Functionally, this is one of the proteins that bind and probably mediate the attachment of the 5S RNA into the large ribosomal subunit, where it forms part of the central protuberance. The polypeptide is Large ribosomal subunit protein uL18 (Vibrio cholerae serotype O1 (strain ATCC 39541 / Classical Ogawa 395 / O395)).